The following is a 333-amino-acid chain: Glycerol-3-phosphate dehydrogenase [NAD(P)+] (333 aa).

Residues serine 10, tryptophan 11, and lysine 105 each contribute to the NADPH site. Residues lysine 105, glycine 136, and threonine 138 each contribute to the sn-glycerol 3-phosphate site. Alanine 140 contributes to the NADPH binding site. Positions 191, 244, 254, 255, and 256 each coordinate sn-glycerol 3-phosphate. The Proton acceptor role is filled by lysine 191. Residue arginine 255 coordinates NADPH. Valine 279 and glutamate 281 together coordinate NADPH.

This sequence belongs to the NAD-dependent glycerol-3-phosphate dehydrogenase family.

The protein resides in the cytoplasm. The enzyme catalyses sn-glycerol 3-phosphate + NAD(+) = dihydroxyacetone phosphate + NADH + H(+). It carries out the reaction sn-glycerol 3-phosphate + NADP(+) = dihydroxyacetone phosphate + NADPH + H(+). It functions in the pathway membrane lipid metabolism; glycerophospholipid metabolism. Its function is as follows. Catalyzes the reduction of the glycolytic intermediate dihydroxyacetone phosphate (DHAP) to sn-glycerol 3-phosphate (G3P), the key precursor for phospholipid synthesis. The protein is Glycerol-3-phosphate dehydrogenase [NAD(P)+] of Syntrophotalea carbinolica (strain DSM 2380 / NBRC 103641 / GraBd1) (Pelobacter carbinolicus).